The sequence spans 413 residues: Tyrosine--tRNA ligase (413 aa).

The 'HIGH' region motif lies at 59–68; the sequence is PTAPDIHLGH. Residues 243–247 carry the 'KMSKS' region motif; sequence KMSKS. Position 246 (Lys-246) interacts with ATP. Residues 351–411 enclose the S4 RNA-binding domain; the sequence is LAIGQLLKQA…GKRRFARVTL (61 aa).

The protein belongs to the class-I aminoacyl-tRNA synthetase family. TyrS type 2 subfamily. In terms of assembly, homodimer.

Its subcellular location is the cytoplasm. It catalyses the reaction tRNA(Tyr) + L-tyrosine + ATP = L-tyrosyl-tRNA(Tyr) + AMP + diphosphate + H(+). Functionally, catalyzes the attachment of tyrosine to tRNA(Tyr) in a two-step reaction: tyrosine is first activated by ATP to form Tyr-AMP and then transferred to the acceptor end of tRNA(Tyr). This is Tyrosine--tRNA ligase from Burkholderia thailandensis (strain ATCC 700388 / DSM 13276 / CCUG 48851 / CIP 106301 / E264).